We begin with the raw amino-acid sequence, 266 residues long: Glucosamine-6-phosphate deaminase (266 aa).

D72 serves as the catalytic Proton acceptor; for enolization step. The For ring-opening step role is filled by D141. Catalysis depends on H143, which acts as the Proton acceptor; for ring-opening step. The active-site For ring-opening step is the E148.

Belongs to the glucosamine/galactosamine-6-phosphate isomerase family. NagB subfamily. As to quaternary structure, homohexamer; trimer of disulfide-linked dimers.

The catalysed reaction is alpha-D-glucosamine 6-phosphate + H2O = beta-D-fructose 6-phosphate + NH4(+). Its pathway is amino-sugar metabolism; N-acetylneuraminate degradation; D-fructose 6-phosphate from N-acetylneuraminate: step 5/5. Allosterically activated by N-acetylglucosamine 6-phosphate (GlcNAc6P). In terms of biological role, catalyzes the reversible isomerization-deamination of glucosamine 6-phosphate (GlcN6P) to form fructose 6-phosphate (Fru6P) and ammonium ion. This chain is Glucosamine-6-phosphate deaminase, found in Vibrio parahaemolyticus serotype O3:K6 (strain RIMD 2210633).